The sequence spans 622 residues: MSPMATDAPAPAATAPELLRNFCIIAHIDHGKSTLADRMLQLTGVVDARAMRAQYLDRMDIERERGITIKSQAVRMPWGYDGTDYALNMIDTPGHVDFTYEVSRSLAACEGAVLLVDAAQGIEAQTLANLYLAMENDLTIIPVLNKIDLPAAQPEKFAEELAKLIGCEPDDCLRVSGKTGVGVEPLLDQIVRQIPAPVGDADAPARAMIFDSVYDTYRGVVTYVRVIDGNLSPREKIVMMSTRATHELLEIGVSSPEPVPSKGLGVGEVGYLITGVKDVRQSKVGDTVTNAAKPSTKALGGYRDPKPMVFSGLYPIDGSDYPLLRDALDKLKLNDAALSYEPETSVALGFGFRIGFLGLLHLEIVRERLEREFNLDLISTAPSVPYEVTLEDKRVVEVTNPSEFPEGKIAEVREPVVRATVLAPSEFIGAVMELCQQRRGELQGMDYLSEDRVEMRYRLPLAEIVFDFFDQLKSRTRGYASLDYDVDGDQAADLVKVDVLLQGEQVDAFSQIVHREKAYGYGVMMAGKLKDLIPRQQFEVPIQAAIGARVIARENVRAIRKDVLAKCYGGDITRKRKLLEKQKEGKKRMKMVGRVEVPQEAFIAALSSDAAGDKAKDKNAKK.

A tr-type G domain is found at 17–198 (ELLRNFCIIA…QIVRQIPAPV (182 aa)). Residues 29–34 (DHGKST) and 145–148 (NKID) each bind GTP.

It belongs to the TRAFAC class translation factor GTPase superfamily. Classic translation factor GTPase family. LepA subfamily.

Its subcellular location is the cell membrane. It catalyses the reaction GTP + H2O = GDP + phosphate + H(+). Its function is as follows. Required for accurate and efficient protein synthesis under certain stress conditions. May act as a fidelity factor of the translation reaction, by catalyzing a one-codon backward translocation of tRNAs on improperly translocated ribosomes. Back-translocation proceeds from a post-translocation (POST) complex to a pre-translocation (PRE) complex, thus giving elongation factor G a second chance to translocate the tRNAs correctly. Binds to ribosomes in a GTP-dependent manner. This is Elongation factor 4 from Kineococcus radiotolerans (strain ATCC BAA-149 / DSM 14245 / SRS30216).